Here is a 248-residue protein sequence, read N- to C-terminus: MRKKLIAGNWKSNGSLERNKALLEGIVNAKALGSVDVVVCPPFPYLQSVESAVSDSMIELGSQNCSATEDGAYTGEVSAKMCADMKCSWVILGHSERRALYAENDEVIACKVKRAVESGLAPILCVGETLADRESGRAEEVTLKQLDAVFMSVQPDDSWVVAYEPVWAIGTGKTASPEDAQSMHKALRNNIRKHFPQIADKIRILYGGSVKSSNAKELFSMPDVDGALVGGASLVSEEFVSIIEAAVE.

Residue 9–11 (NWK) participates in substrate binding. The Electrophile role is filled by His-94. Glu-164 (proton acceptor) is an active-site residue. Residues Gly-170, Ser-209, and 230–231 (GG) each bind substrate.

The protein belongs to the triosephosphate isomerase family. Homodimer.

The protein localises to the cytoplasm. It carries out the reaction D-glyceraldehyde 3-phosphate = dihydroxyacetone phosphate. It participates in carbohydrate biosynthesis; gluconeogenesis. Its pathway is carbohydrate degradation; glycolysis; D-glyceraldehyde 3-phosphate from glycerone phosphate: step 1/1. Involved in the gluconeogenesis. Catalyzes stereospecifically the conversion of dihydroxyacetone phosphate (DHAP) to D-glyceraldehyde-3-phosphate (G3P). The protein is Triosephosphate isomerase of Hahella chejuensis (strain KCTC 2396).